The sequence spans 446 residues: O-antigen polymerase (446 aa).

11 helical membrane passes run 11–31 (ICSY…VINE), 33–53 (FCEI…VIII), 58–78 (QGGF…FILI), 104–124 (IYVF…VLLY), 147–167 (QLSM…IKSY), 186–206 (LYDE…SLLF), 211–231 (NFIL…LVGL), 252–272 (LKIK…SLFL), 355–375 (IYLG…SLAF), 391–411 (KLAY…IYFA), and 415–435 (LFDF…LSIV).

It localises to the cell inner membrane. It carries out the reaction n lipid-linked O-antigen repeat units = a lipid-linked O antigen + (n-1) polyisoprenyl diphosphate.. Its pathway is bacterial outer membrane biogenesis; LPS O-antigen biosynthesis. In terms of biological role, polymerase involved in the biosynthesis of the lipopolysaccharide (LPS). Catalyzes the polymerization of the O-antigen repeat units on the periplasmic face of the inner membrane, leading to the formation of the lipid-linked O-antigen molecule. In vitro, shows a preference for bacteria-based, undecaprenyl-containing substrates rather than eukaryote-based, dolichol-containing substrates. The sequence is that of O-antigen polymerase from Escherichia coli.